Reading from the N-terminus, the 351-residue chain is c-di-GMP synthase (351 aa).

The protein belongs to the CD-NTase family. E05 subfamily.

It catalyses the reaction 2 GTP = 3',3'-c-di-GMP + 2 diphosphate. Cyclic nucleotide synthase (second messenger synthase) of a CBASS antivirus system. CBASS (cyclic oligonucleotide-based antiphage signaling system) provides immunity against bacteriophage. The CD-NTase protein synthesizes cyclic nucleotides in response to infection; these serve as specific second messenger signals. The signals activate a diverse range of effectors, leading to bacterial cell death and thus abortive phage infection. A type I-D(GG) CBASS system. Its function is as follows. Cyclic dinucleotide synthase that catalyzes the synthesis of c-di-GMP, has no activity with other NTP substrates. The polypeptide is c-di-GMP synthase (cdnE) (Capnocytophaga granulosa (strain ATCC 51502 / DSM 11449 / JCM 8566 / LMG 16022 / NCTC 12948 / B0611)).